A 185-amino-acid chain; its full sequence is Translation initiation factor IF-3, chloroplastic (185 aa).

This sequence belongs to the IF-3 family. As to quaternary structure, monomer.

The protein resides in the plastid. It is found in the chloroplast. Its function is as follows. IF-3 binds to the 30S ribosomal subunit and shifts the equilibrium between 70S ribosomes and their 50S and 30S subunits in favor of the free subunits, thus enhancing the availability of 30S subunits on which protein synthesis initiation begins. This is Translation initiation factor IF-3, chloroplastic from Cyanidium caldarium (Red alga).